The following is a 213-amino-acid chain: LexA repressor (213 aa).

The H-T-H motif DNA-binding region spans 29 to 49 (RAEIAQALGFRSPNAAEDHLK). Active-site for autocatalytic cleavage activity residues include Ser-131 and Lys-168.

It belongs to the peptidase S24 family. In terms of assembly, homodimer.

It carries out the reaction Hydrolysis of Ala-|-Gly bond in repressor LexA.. In terms of biological role, represses a number of genes involved in the response to DNA damage (SOS response), including recA and lexA. In the presence of single-stranded DNA, RecA interacts with LexA causing an autocatalytic cleavage which disrupts the DNA-binding part of LexA, leading to derepression of the SOS regulon and eventually DNA repair. The chain is LexA repressor from Bordetella avium (strain 197N).